The primary structure comprises 89 residues: Putative membrane protein insertion efficiency factor (89 aa).

Belongs to the UPF0161 family.

It localises to the cell membrane. Its function is as follows. Could be involved in insertion of integral membrane proteins into the membrane. In Exiguobacterium sp. (strain ATCC BAA-1283 / AT1b), this protein is Putative membrane protein insertion efficiency factor.